A 76-amino-acid chain; its full sequence is Acyl carrier protein (76 aa).

Residues 1-75 (MVFEKIKALI…DIVFYITKNT (75 aa)) enclose the Carrier domain. Serine 35 carries the post-translational modification O-(pantetheine 4'-phosphoryl)serine.

This sequence belongs to the acyl carrier protein (ACP) family. 4'-phosphopantetheine is transferred from CoA to a specific serine of apo-ACP by AcpS. This modification is essential for activity because fatty acids are bound in thioester linkage to the sulfhydryl of the prosthetic group.

The protein resides in the cytoplasm. The protein operates within lipid metabolism; fatty acid biosynthesis. Functionally, carrier of the growing fatty acid chain in fatty acid biosynthesis. The sequence is that of Acyl carrier protein from Onion yellows phytoplasma (strain OY-M).